A 282-amino-acid chain; its full sequence is tRNA pseudouridine synthase B (282 aa).

The active-site Nucleophile is the aspartate 39.

The protein belongs to the pseudouridine synthase TruB family. Type 1 subfamily.

The enzyme catalyses uridine(55) in tRNA = pseudouridine(55) in tRNA. Responsible for synthesis of pseudouridine from uracil-55 in the psi GC loop of transfer RNAs. The protein is tRNA pseudouridine synthase B of Borreliella burgdorferi (strain ATCC 35210 / DSM 4680 / CIP 102532 / B31) (Borrelia burgdorferi).